We begin with the raw amino-acid sequence, 174 residues long: Shikimate kinase 2 (174 aa).

12–17 (GCGKTT) is an ATP binding site. Mg(2+) contacts are provided by T16 and D32. Positions 34, 58, and 79 each coordinate substrate. The LID domain stretch occupies residues 112–126 (QAAPEEDLRPTLTGK). Residue R120 participates in ATP binding. R139 lines the substrate pocket.

This sequence belongs to the shikimate kinase family. AroL subfamily. Monomer. It depends on Mg(2+) as a cofactor.

The protein localises to the cytoplasm. It catalyses the reaction shikimate + ATP = 3-phosphoshikimate + ADP + H(+). It functions in the pathway metabolic intermediate biosynthesis; chorismate biosynthesis; chorismate from D-erythrose 4-phosphate and phosphoenolpyruvate: step 5/7. Functionally, catalyzes the specific phosphorylation of the 3-hydroxyl group of shikimic acid using ATP as a cosubstrate. This Escherichia coli O1:K1 / APEC protein is Shikimate kinase 2.